We begin with the raw amino-acid sequence, 451 residues long: F-box/kelch-repeat protein At1g74510 (451 aa).

One can recognise an F-box domain in the interval 93 to 139 (SSPVTRLDQNALLNCLAHCSLSDFGSIASTNRTFRSLIKDSELYRLR). 5 Kelch repeats span residues 137-188 (RLRR…KESL), 193-236 (ELLV…SLGE), 237-284 (IAVI…FMDG), 286-333 (FYCI…DQAK), and 349-395 (AVVK…GMAF).

In Arabidopsis thaliana (Mouse-ear cress), this protein is F-box/kelch-repeat protein At1g74510.